A 96-amino-acid polypeptide reads, in one-letter code: uncharacterized protein (96 aa).

The chain crosses the membrane as a helical span at residues 53 to 71 (VLLMPLLQSFVLSLALMGV).

Its subcellular location is the membrane. This is an uncharacterized protein from Saccharomyces cerevisiae (strain ATCC 204508 / S288c) (Baker's yeast).